The sequence spans 240 residues: Glutathione S-transferase theta-1 (240 aa).

The GST N-terminal domain maps to 2–82 (VLELYLDLLS…YLAHKYKVPD (81 aa)). Residues His-40, 53 to 54 (KV), and 66 to 67 (ES) each bind glutathione. The GST C-terminal domain maps to 88–223 (DLQARARVDE…ILKVRDCPPA (136 aa)).

This sequence belongs to the GST superfamily. Theta family. Homodimer. As to expression, in liver, highest expression found in central vein limiting plate hepatocytes. In lung, expressed mainly in club cells of the bronchiolar epithelium and, at low levels, in type II alveolar cells.

The protein localises to the cytoplasm. It carries out the reaction RX + glutathione = an S-substituted glutathione + a halide anion + H(+). Conjugation of reduced glutathione to a wide number of exogenous and endogenous hydrophobic electrophiles. Also binds steroids, bilirubin, carcinogens and numerous organic anions. Has dichloromethane dehalogenase activity. The polypeptide is Glutathione S-transferase theta-1 (Gstt1) (Rattus norvegicus (Rat)).